A 260-amino-acid chain; its full sequence is Neuraminyllactose-binding hemagglutinin (260 aa).

The signal sequence occupies residues 1-27; it reads MKTNGHFKDFAWKKCLLGASVGALLVG. Residue cysteine 28 is the site of N-palmitoyl cysteine attachment. Residue cysteine 28 is the site of S-diacylglycerol cysteine attachment. Residues 134–139 are N-acetyl-neuraminyl-alpha(2,3)-lactose binding motif; that stretch reads KRTIQK.

The protein resides in the cell outer membrane. This chain is Neuraminyllactose-binding hemagglutinin (hpaA), found in Helicobacter pylori (Campylobacter pylori).